A 236-amino-acid polypeptide reads, in one-letter code: Ribosomal RNA small subunit methyltransferase G (236 aa).

Residues Gly80, 131–132 (AE), and Arg148 each bind S-adenosyl-L-methionine.

It belongs to the methyltransferase superfamily. RNA methyltransferase RsmG family.

Its subcellular location is the cytoplasm. Its function is as follows. Specifically methylates the N7 position of a guanine in 16S rRNA. The sequence is that of Ribosomal RNA small subunit methyltransferase G from Ureaplasma parvum serovar 3 (strain ATCC 27815 / 27 / NCTC 11736).